Reading from the N-terminus, the 116-residue chain is Large ribosomal subunit protein bL19 (116 aa).

Belongs to the bacterial ribosomal protein bL19 family.

Its function is as follows. This protein is located at the 30S-50S ribosomal subunit interface and may play a role in the structure and function of the aminoacyl-tRNA binding site. This chain is Large ribosomal subunit protein bL19, found in Actinobacillus pleuropneumoniae serotype 5b (strain L20).